The chain runs to 1822 residues: Integrin beta-4 (1822 aa).

The signal sequence occupies residues 1 to 27 (MAGPRPSPWARLLLAALISVSLSGTLA). Residues 28–710 (NRCKKAPVKS…HKKKDCPPGS (683 aa)) are Extracellular-facing. Positions 29 to 73 (RCKKAPVKSCTECVRVDKDCAYCTDEMFRDRRCNTQAELLAAGCQ) constitute a PSI domain. Intrachain disulfides connect cysteine 30–cysteine 48, cysteine 38–cysteine 455, cysteine 41–cysteine 61, cysteine 51–cysteine 72, cysteine 245–cysteine 288, cysteine 457–cysteine 476, cysteine 468–cysteine 479, and cysteine 481–cysteine 490. The VWFA domain maps to 131–329 (DLYILMDFSN…IPIFAVTNYS (199 aa)). Residues serine 139 and serine 141 each contribute to the Mg(2+) site. The Ca(2+) site is built by serine 141, aspartate 144, aspartate 145, and aspartate 176. Residues 194 to 199 (WPNSDP) are involved in NRG1- and IGF1-binding. 4 residues coordinate Ca(2+): asparagine 228, aspartate 230, proline 232, and glutamate 233. Position 233 (glutamate 233) interacts with Mg(2+). Asparagine 327 carries N-linked (GlcNAc...) asparagine glycosylation. Glutamate 350 lines the Ca(2+) pocket. I-EGF domains follow at residues 457 to 491 (CELQ…QTCN), 492 to 537 (CSTG…QFCE), 538 to 574 (YDNF…PSCD), and 575 to 615 (CPLS…TICE). An N-linked (GlcNAc...) asparagine glycan is attached at asparagine 491. 11 disulfide bridges follow: cysteine 492–cysteine 520, cysteine 503–cysteine 518, cysteine 512–cysteine 523, cysteine 525–cysteine 536, cysteine 543–cysteine 557, cysteine 551–cysteine 562, cysteine 564–cysteine 573, cysteine 575–cysteine 598, cysteine 582–cysteine 596, cysteine 590–cysteine 601, and cysteine 603–cysteine 614. Asparagine 579 is a glycosylation site (N-linked (GlcNAc...) asparagine). A glycan (N-linked (GlcNAc...) asparagine) is linked at asparagine 617. Intrachain disulfides connect cysteine 626/cysteine 671, cysteine 632/cysteine 651, cysteine 635/cysteine 648, and cysteine 680/cysteine 706. Asparagine 695 carries N-linked (GlcNAc...) asparagine glycosylation. The chain crosses the membrane as a helical span at residues 711 to 733 (FWWLIPLLLLLLPLLALLLLLCW). Residues 732 to 749 (CWKYCACCKACLALLPCC) are palmitoylated on several cysteines. Over 734–1822 (KYCACCKACL…THMDQQFFQT (1089 aa)) the chain is Cytoplasmic. Phosphoserine occurs at positions 771, 1069, and 1119. Residues 979–1084 (VNITIIKEQA…QVRRFHVQLS (106 aa)) form the Calx-beta domain. The disordered stretch occupies residues 1113 to 1140 (TSQMLSSQPPPHGDLGAPQNPNAKAAGS). 2 Fibronectin type-III domains span residues 1129–1218 (APQN…THQE) and 1222–1321 (EPGR…TQPK). Residues 1400–1444 (LSASSGRSSDAEAPHGPPDDGGAGGKGGSLPRSATPGPPGEHLVN) form a disordered region. Residues 1418-1427 (DDGGAGGKGG) are compositionally biased toward gly residues. 3 positions are modified to phosphoserine: serine 1454, serine 1457, and serine 1474. Threonine 1487 bears the Phosphothreonine mark. Serine 1494 is subject to Phosphoserine. A disordered region spans residues 1495-1525 (LTRSEHSHSTTLPRDYSTLTSVSSHDSRLTA). Over residues 1503-1518 (STTLPRDYSTLTSVSS) the composition is skewed to polar residues. Threonine 1530 bears the Phosphothreonine mark. Fibronectin type-III domains lie at 1530–1625 (TPTR…VHPQ) and 1643–1739 (APGP…SQDG). Serine 1791 bears the Phosphoserine mark.

The protein belongs to the integrin beta chain family. Heterodimer of an alpha and a beta subunit. Beta-4 associates with alpha-6. Interacts (via cytoplasmic region) with COL17A1 (via cytoplasmic region). Interacts (via cytoplasmic region) with DST isoform 3 (via N-terminus). Isoform beta-4a interacts (via cytoplasmic domain) with DST (via N-terminus). Interacts with RAC1. ITGA6:ITGB4 is found in a ternary complex with NRG1 and ERBB3. ITGA6:ITGB4 is found in a ternary complex with IGF1 and IGF1R. ITGA6:ITGB4 interacts with IGF2. Interacts with TMEM268; this interaction prevents ITGB4 degradation. Palmitoylated by DHHC3 at several cysteines of the membrane-proximal region, enhancing stability and cell surface expression. Palmitoylation also promotes secondary association with tertaspanins. Integrin alpha-6/beta-4 is predominantly expressed by epithelia. Isoform beta-4D is also expressed in colon and placenta. Isoform beta-4E is also expressed in epidermis, lung, duodenum, heart, spleen and stomach.

It is found in the cell membrane. The protein resides in the cell junction. The protein localises to the hemidesmosome. Integrin alpha-6/beta-4 is a receptor for laminin. Plays a critical structural role in the hemidesmosome of epithelial cells. Is required for the regulation of keratinocyte polarity and motility. ITGA6:ITGB4 binds to NRG1 (via EGF domain) and this binding is essential for NRG1-ERBB signaling. ITGA6:ITGB4 binds to IGF1 and this binding is essential for IGF1 signaling. ITGA6:ITGB4 binds to IGF2 and this binding is essential for IGF2 signaling. This chain is Integrin beta-4 (ITGB4), found in Homo sapiens (Human).